A 216-amino-acid polypeptide reads, in one-letter code: Small ribosomal subunit protein uS3c (216 aa).

The region spanning 43-118 is the KH type-2 domain; sequence IKNYIQKNIR…KLNIAIVKIT (76 aa).

It belongs to the universal ribosomal protein uS3 family. Part of the 30S ribosomal subunit.

Its subcellular location is the plastid. The protein resides in the chloroplast. The sequence is that of Small ribosomal subunit protein uS3c (rps3) from Phaseolus vulgaris (Kidney bean).